The sequence spans 377 residues: Tubulin--tyrosine ligase (377 aa).

Residues 3 to 370 enclose the TTL domain; it reads TFVVRDENSS…PPDTEQVPQQ (368 aa).

It belongs to the tubulin--tyrosine ligase family. In terms of assembly, monomer. Mg(2+) serves as cofactor. It depends on K(+) as a cofactor.

It catalyses the reaction C-terminal L-alpha-aminoacyl-L-glutamyl-L-glutamyl-[tubulin] + L-tyrosine + ATP = C-terminal L-alpha-aminoacyl-L-glutamyl-L-glutamyl-L-tyrosyl-[tubulin] + ADP + phosphate + H(+). Its function is as follows. Catalyzes the post-translational addition of a tyrosine to the C-terminal end of detyrosinated alpha-tubulin. The sequence is that of Tubulin--tyrosine ligase (Ttl) from Mus musculus (Mouse).